Here is a 734-residue protein sequence, read N- to C-terminus: Photosystem I P700 chlorophyll a apoprotein A2 (734 aa).

8 helical membrane-spanning segments follow: residues 46-69 (IFAS…FHVA), 135-158 (LYSG…LHLQ), 175-199 (LNHH…HVAI), 273-291 (MAHH…GHMY), 330-353 (LHIQ…QHMY), 369-395 (ASLY…IFFV), 417-439 (AIIS…LYVH), and 517-535 (FLVH…LILV). Residues Cys-559 and Cys-568 each coordinate [4Fe-4S] cluster. Helical transmembrane passes span 575–596 (AFYL…YWHW) and 643–665 (LSVW…MFLI). The chlorophyll a site is built by His-654, Met-662, and Tyr-670. Trp-671 is a binding site for phylloquinone. Residues 707–727 (LVGLAHFSVGYVLTYAAFVLA) traverse the membrane as a helical segment.

This sequence belongs to the PsaA/PsaB family. The PsaA/B heterodimer binds the P700 chlorophyll special pair and subsequent electron acceptors. PSI consists of a core antenna complex that captures photons, and an electron transfer chain that converts photonic excitation into a charge separation. The eukaryotic PSI reaction center is composed of at least 11 subunits. The cofactor is P700 is a chlorophyll a/chlorophyll a' dimer, A0 is one or more chlorophyll a, A1 is one or both phylloquinones and FX is a shared 4Fe-4S iron-sulfur center..

The protein localises to the plastid. It is found in the chloroplast thylakoid membrane. The catalysed reaction is reduced [plastocyanin] + hnu + oxidized [2Fe-2S]-[ferredoxin] = oxidized [plastocyanin] + reduced [2Fe-2S]-[ferredoxin]. In terms of biological role, psaA and PsaB bind P700, the primary electron donor of photosystem I (PSI), as well as the electron acceptors A0, A1 and FX. PSI is a plastocyanin/cytochrome c6-ferredoxin oxidoreductase, converting photonic excitation into a charge separation, which transfers an electron from the donor P700 chlorophyll pair to the spectroscopically characterized acceptors A0, A1, FX, FA and FB in turn. Oxidized P700 is reduced on the lumenal side of the thylakoid membrane by plastocyanin or cytochrome c6. The chain is Photosystem I P700 chlorophyll a apoprotein A2 from Pyropia yezoensis (Susabi-nori).